We begin with the raw amino-acid sequence, 407 residues long: Pyridinium-3,5-bisthiocarboxylic acid mononucleotide nickel insertion protein (407 aa).

The protein belongs to the LarC family.

It catalyses the reaction Ni(II)-pyridinium-3,5-bisthiocarboxylate mononucleotide = pyridinium-3,5-bisthiocarboxylate mononucleotide + Ni(2+). Involved in the biosynthesis of a nickel-pincer cofactor ((SCS)Ni(II) pincer complex). Binds Ni(2+), and functions in nickel delivery to pyridinium-3,5-bisthiocarboxylic acid mononucleotide (P2TMN), to form the mature cofactor. Is thus probably required for the activation of nickel-pincer cofactor-dependent enzymes. The sequence is that of Pyridinium-3,5-bisthiocarboxylic acid mononucleotide nickel insertion protein from Acetivibrio thermocellus (strain ATCC 27405 / DSM 1237 / JCM 9322 / NBRC 103400 / NCIMB 10682 / NRRL B-4536 / VPI 7372) (Clostridium thermocellum).